The following is a 361-amino-acid chain: Histidinol-phosphate aminotransferase (361 aa).

Lys-219 carries the N6-(pyridoxal phosphate)lysine modification.

The protein belongs to the class-II pyridoxal-phosphate-dependent aminotransferase family. Histidinol-phosphate aminotransferase subfamily. In terms of assembly, homodimer. Requires pyridoxal 5'-phosphate as cofactor.

The catalysed reaction is L-histidinol phosphate + 2-oxoglutarate = 3-(imidazol-4-yl)-2-oxopropyl phosphate + L-glutamate. It functions in the pathway amino-acid biosynthesis; L-histidine biosynthesis; L-histidine from 5-phospho-alpha-D-ribose 1-diphosphate: step 7/9. This chain is Histidinol-phosphate aminotransferase, found in Acinetobacter baumannii (strain AB307-0294).